A 244-amino-acid polypeptide reads, in one-letter code: Uridylate kinase (244 aa).

11–14 contributes to the ATP binding site; it reads KLSG. The segment at 19–24 is involved in allosteric activation by GTP; the sequence is GSLGYG. Gly53 contributes to the UMP binding site. Residues Gly54 and Arg58 each coordinate ATP. Residues Asp73 and 134–141 contribute to the UMP site; that span reads SGNPFFTT. The ATP site is built by Thr161, Tyr167, and Asp170.

This sequence belongs to the UMP kinase family. Homohexamer.

The protein localises to the cytoplasm. The enzyme catalyses UMP + ATP = UDP + ADP. It functions in the pathway pyrimidine metabolism; CTP biosynthesis via de novo pathway; UDP from UMP (UMPK route): step 1/1. Allosterically activated by GTP. Inhibited by UTP. Functionally, catalyzes the reversible phosphorylation of UMP to UDP. The protein is Uridylate kinase of Trichodesmium erythraeum (strain IMS101).